The following is a 128-amino-acid chain: Insulin-like 3 (128 aa).

The signal sequence occupies residues M1–A15. 3 cysteine pairs are disulfide-bonded: C29-C113, C41-C126, and C112-C117. Over residues A81–H94 the composition is skewed to low complexity. Residues A81–R101 form a disordered region.

The protein belongs to the insulin family. In terms of assembly, heterodimer of a B chain and an A chain linked by two disulfide bonds. As to expression, expressed in Leydig cells of the testis, and weakly in the theca interna cells of antral follicles and the corpus luteum of the ovary.

It is found in the secreted. Its function is as follows. Seems to play a role in testicular function. May be a trophic hormone with a role in testicular descent in fetal life. Is a ligand for LGR8 receptor. This Rattus norvegicus (Rat) protein is Insulin-like 3 (Insl3).